The sequence spans 84 residues: M-zodatoxin-Lt2b (84 aa).

An N-terminal signal peptide occupies residues 1-22 (MKYFVIALALAVALVCIAESTA). A propeptide spanning residues 23–58 (YEVNEELENELDDLDDAAWLAVAEELQGLEDFEESR) is cleaved from the precursor. The short motif at 55-58 (EESR) is the Processing quadruplet motif element.

Post-translationally, cleavage of the propeptide depends on the processing quadruplet motif (XXXR, with at least one of X being E). As to expression, expressed by the venom gland.

It is found in the secreted. Has antimicrobial activity against both Gram-positive and Gram-negative bacteria, and yeasts. Also has a strong hemolytic activity against rabbit erythrocytes. Causes paralysis, but is not lethal when injected into insect (M.domestica) larvae. In Lachesana tarabaevi (Spider), this protein is M-zodatoxin-Lt2b.